Here is a 1139-residue protein sequence, read N- to C-terminus: Solute carrier family 12 member 5 (1139 aa).

Disordered regions lie at residues 1 to 63 (MSRR…GKEY) and 92 to 116 (TNLP…KPVQ). The Cytoplasmic portion of the chain corresponds to 1 to 98 (MSRRFTVTSL…ANYTNLPQGS (98 aa)). Basic and acidic residues predominate over residues 19–45 (PDPESRRHSVADPRHLPGEDVKGDGNP). Residues 46–55 (KESSPFINST) are compositionally biased toward polar residues. The residue at position 57 (T57) is a Phosphothreonine. The segment covering 98–111 (SREHEEAENNEGGK) has biased composition (basic and acidic residues). Residues 99-120 (REHEEAENNEGGKKKPVQAPRM) form a discontinuously helical membrane-spanning segment. K113 lines the K(+) pocket. Topologically, residues 121 to 129 (GTFMGVYLP) are extracellular. Residues 130-151 (CLQNIFGVILFLRLTWVVGIAG) traverse the membrane as a helical segment. Topologically, residues 152-174 (IMESFCMVFICCSCTMLTAISMS) are cytoplasmic. Residues 175–203 (AIATNGVVPAGGSYYMISRSLGPEFGGAV) form a helical membrane-spanning segment. Residue A184 participates in chloride binding. Over 204-229 (GLCFYLGTTFAGAMYILGTIEILLAY) the chain is Extracellular. Helical transmembrane passes span 230-250 (LFPA…AAML) and 251-276 (NNMR…KYVN). Over 277–402 (KFALVFLGCV…ERSGMTSVGL (126 aa)) the chain is Extracellular. Residues C310 and C325 are joined by a disulfide bond. 4 N-linked (GlcNAc...) asparagine glycosylation sites follow: N314, N333, N351, and N362. The cysteines at positions 345 and 354 are disulfide-linked. The helical transmembrane segment at 403 to 420 (ADGTPIDMDHPYVFSDMT) threads the bilayer. M410 is a K(+) binding site. Y414 and V415 together coordinate chloride. Residues 421-429 (SYFTLLVGI) are Cytoplasmic-facing. A helical transmembrane segment spans residues 430–453 (YFPSVTGIMAGSNRSGDLRDAQKS). Position 446 (D446) interacts with K(+). Residues 454–485 (IPTGTILAIATTSAVYISSVVLFGACIEGVVL) lie on the Extracellular side of the membrane. The chain crosses the membrane as a helical span at residues 486 to 513 (RDKFGEAVNGNLVVGTLAWPSPWVIVIG). Topologically, residues 514–534 (SFFSTCGAGLQSLTGAPRLLQ) are cytoplasmic. The next 2 helical transmembrane spans lie at 535–555 (AISR…KANG) and 556–578 (EPTW…ASLD). Residue E569 coordinates chloride. The Cytoplasmic portion of the chain corresponds to 579 to 592 (EVAPILSMFFLMCY). 2 consecutive transmembrane segments (helical) span residues 593 to 615 (MFVN…PRFR) and 616 to 632 (YYHW…CLAL). The Cytoplasmic segment spans residues 633 to 1139 (MFICSWYYAL…GGREVITIYS (507 aa)). The segment at 667 to 681 (GIRGLSLSAARYALL) is scissor helix. T929 carries the phosphothreonine; by OXSR1 and STK39 modification. Residues 942–1052 (MHLTKNERER…GPSPVSSEGI (111 aa)) are disordered. The segment covering 945–962 (TKNEREREIQSITDESRG) has biased composition (basic and acidic residues). Positions 982 to 994 (TAGDSEEKPEEEV) are enriched in acidic residues. Residues 1003–1012 (PSCPSSSPSP) show a composition bias toward low complexity. Residues 1023–1042 (DPEKVHLTWTKDKSVAEKNK) are compositionally biased toward basic and acidic residues. A Phosphothreonine; by OXSR1 and STK39 modification is found at T1030. Phosphoserine occurs at positions 1045, 1048, and 1049.

Belongs to the SLC12A transporter family. K/Cl co-transporter subfamily. In terms of assembly, homodimer; adopts a domain-swap conformation at the scissor helices connecting the transmembrane domain and C-terminal domain. Heterodimer with K-Cl cotransporters SLC12A6 and SLC12A7. Interacts with AP2A1. Post-translationally, phosphorylated at Thr-929 and Thr-1030 by OXSR1/OSR1 and STK39/SPAK downstream of WNK kinases (WNK1, WNK2, WNK3 or WNK4), inhibiting the potassium-chloride cotransport activity. Brain specific. Detected in neuronal cells.

It localises to the cell membrane. The protein resides in the cell projection. Its subcellular location is the dendrite. The catalysed reaction is K(+)(in) + chloride(in) = K(+)(out) + chloride(out). With respect to regulation, inhibited following phosphorylation by OXSR1/OSR1 and STK39/SPAK: phosphorylation takes place downstream of WNK kinases (WNK1, WNK2, WNK3 or WNK4) in response to hyperosmotic stress and subsequent cell shrinkage. Mediates electroneutral potassium-chloride cotransport in mature neurons and is required for neuronal Cl(-) homeostasis. As major extruder of intracellular chloride, it establishes the low neuronal Cl(-) levels required for chloride influx after binding of GABA-A and glycine to their receptors, with subsequent hyperpolarization and neuronal inhibition. Involved in the regulation of dendritic spine formation and maturation. The polypeptide is Solute carrier family 12 member 5 (Homo sapiens (Human)).